The chain runs to 375 residues: Meiotic driver cw27 (375 aa).

Disordered regions lie at residues 1–42 (MKNK…STLP) and 74–103 (DYDENRLLITDEGNNPPNTHRENHSSGTTD). Residues 11 to 29 (SMDELSTKNDNEIDLEKGP) show a composition bias toward basic and acidic residues. 7 helical membrane-spanning segments follow: residues 108–128 (FLIKLLISFTSIILFNAPAVC), 145–165 (WTLIGFWCASSLIIFTFSWCF), 172–192 (AVKVTVIFLAQCIKVTAISLA), 208–228 (EMMIIIWILWLIICCILFGCV), 245–265 (TISAVLFLIVSSVCIPIWTLW), 272–292 (LQVLGIHGIIALLVNGLMSLF), and 336–356 (VIGFILGGIANAIGGIANAIG).

This sequence belongs to the WTF family. Homomer. Forms protein aggregates. The two isoforms can interact with each other and with themselves. High sequence similarity is required for their interaction.

The protein resides in the spore membrane. It is found in the vacuole. The protein localises to the membrane. Its subcellular location is the ascus epiplasm. It localises to the cytoplasm. The protein resides in the endoplasmic reticulum. Promotes unequal transmission of alleles from the parental zygote to progeny spores by acting as poison/antidote system where the poison and antidote proteins are produced from the same locus; the poison component is trans-acting and targets all spores within an ascus whereas the antidote component is spore-specific, leading to poisoning of all progeny that do not inherit the allele. Functionally, localizes isoform 2 to the vacuole thereby facilitating its degradation. In terms of biological role, forms toxic aggregates that disrupt spore maturation. The sequence is that of Meiotic driver cw27 from Schizosaccharomyces pombe (Fission yeast).